The following is a 144-amino-acid chain: Transcription antitermination protein NusB (144 aa).

This sequence belongs to the NusB family.

Involved in transcription antitermination. Required for transcription of ribosomal RNA (rRNA) genes. Binds specifically to the boxA antiterminator sequence of the ribosomal RNA (rrn) operons. This is Transcription antitermination protein NusB from Haemophilus influenzae (strain PittGG).